Reading from the N-terminus, the 582-residue chain is Phosphoribosylaminoimidazole carboxylase (582 aa).

Positions 114–305 (KKYLAERGVA…QFENHLRAIL (192 aa)) constitute an ATP-grasp domain. 143–200 (AGRLGLPLMLKAKTLAYDGRGNSPLKSASSGDIQASLKFLGDRPLYAEGWAPFVKEVA) is a binding site for ATP.

This sequence in the C-terminal section; belongs to the AIR carboxylase family. Class I subfamily.

The enzyme catalyses 5-amino-1-(5-phospho-D-ribosyl)imidazole-4-carboxylate + H(+) = 5-amino-1-(5-phospho-beta-D-ribosyl)imidazole + CO2. The protein operates within purine metabolism; IMP biosynthesis via de novo pathway; 5-amino-1-(5-phospho-D-ribosyl)imidazole-4-carboxylate from 5-amino-1-(5-phospho-D-ribosyl)imidazole (carboxylase route): step 1/1. The chain is Phosphoribosylaminoimidazole carboxylase (ADE2) from Cryptococcus neoformans var. neoformans serotype D (strain JEC21 / ATCC MYA-565) (Filobasidiella neoformans).